We begin with the raw amino-acid sequence, 469 residues long: GTPase Der (469 aa).

EngA-type G domains lie at proline 30–alanine 193 and arginine 203–aspartate 376. GTP-binding positions include glycine 36–serine 43, aspartate 83–tryptophan 87, asparagine 145–aspartate 148, glycine 209–serine 216, aspartate 256–leucine 260, and asparagine 321–aspartate 324. The KH-like domain occupies threonine 377 to glutamate 459.

This sequence belongs to the TRAFAC class TrmE-Era-EngA-EngB-Septin-like GTPase superfamily. EngA (Der) GTPase family. As to quaternary structure, associates with the 50S ribosomal subunit.

GTPase that plays an essential role in the late steps of ribosome biogenesis. This is GTPase Der from Mycobacterium ulcerans (strain Agy99).